We begin with the raw amino-acid sequence, 316 residues long: Peroxidase 31 (316 aa).

The first 19 residues, 1–19, serve as a signal peptide directing secretion; the sequence is MASLKSLFLLFLFFFTAQS. 4 disulfides stabilise this stretch: Cys30/Cys111, Cys63/Cys68, Cys117/Cys312, and Cys196/Cys222. Catalysis depends on His61, which acts as the Proton acceptor. Ca(2+) contacts are provided by Asp62, Gly67, Asp69, and Ser71. A substrate-binding site is contributed by Pro159. A heme b-binding site is contributed by His189. Residue Ser190 coordinates Ca(2+). A glycan (N-linked (GlcNAc...) asparagine) is linked at Asn206. Residues Asp236, Thr239, and Asp244 each contribute to the Ca(2+) site.

Belongs to the peroxidase family. Classical plant (class III) peroxidase subfamily. The cofactor is heme b. Ca(2+) serves as cofactor.

It is found in the secreted. The catalysed reaction is 2 a phenolic donor + H2O2 = 2 a phenolic radical donor + 2 H2O. Functionally, removal of H(2)O(2), oxidation of toxic reductants, biosynthesis and degradation of lignin, suberization, auxin catabolism, response to environmental stresses such as wounding, pathogen attack and oxidative stress. These functions might be dependent on each isozyme/isoform in each plant tissue. This chain is Peroxidase 31 (PER31), found in Arabidopsis thaliana (Mouse-ear cress).